We begin with the raw amino-acid sequence, 232 residues long: MSISNSIRAQIPPIHPEGYPFIGGFALVSLILFWIFTPLGWIGTLLTVWCALFFRDPIRVTPQREGLVVAPADGRISMITRALPPAELGLGDRPLLRVSIFMSVFNVHVNRSPVAGRIEKISYRPGAFINAELDKASEDNERNSLAISTPHGKIGVVQIAGLVARRIVSFVREGQTVGAGERFGLIRFGSRLDVYLPDGTEVLVSEGQTAIAGETILADFDVATPGLTFRSQ.

The active-site Schiff-base intermediate with substrate; via pyruvic acid is S190. S190 carries the pyruvic acid (Ser); by autocatalysis modification.

The protein belongs to the phosphatidylserine decarboxylase family. PSD-A subfamily. In terms of assembly, heterodimer of a large membrane-associated beta subunit and a small pyruvoyl-containing alpha subunit. Pyruvate serves as cofactor. Post-translationally, is synthesized initially as an inactive proenzyme. Formation of the active enzyme involves a self-maturation process in which the active site pyruvoyl group is generated from an internal serine residue via an autocatalytic post-translational modification. Two non-identical subunits are generated from the proenzyme in this reaction, and the pyruvate is formed at the N-terminus of the alpha chain, which is derived from the carboxyl end of the proenzyme. The post-translation cleavage follows an unusual pathway, termed non-hydrolytic serinolysis, in which the side chain hydroxyl group of the serine supplies its oxygen atom to form the C-terminus of the beta chain, while the remainder of the serine residue undergoes an oxidative deamination to produce ammonia and the pyruvoyl prosthetic group on the alpha chain.

Its subcellular location is the cell membrane. The enzyme catalyses a 1,2-diacyl-sn-glycero-3-phospho-L-serine + H(+) = a 1,2-diacyl-sn-glycero-3-phosphoethanolamine + CO2. It functions in the pathway phospholipid metabolism; phosphatidylethanolamine biosynthesis; phosphatidylethanolamine from CDP-diacylglycerol: step 2/2. Catalyzes the formation of phosphatidylethanolamine (PtdEtn) from phosphatidylserine (PtdSer). This Bradyrhizobium sp. (strain BTAi1 / ATCC BAA-1182) protein is Phosphatidylserine decarboxylase proenzyme.